A 1311-amino-acid chain; its full sequence is Cyclin-G-associated kinase (1311 aa).

An N-acetylserine modification is found at S2. Phosphoserine occurs at positions 2 and 16. The region spanning 40–314 is the Protein kinase domain; it reads LRVRRVLAEG…SIAEVVHQLQ (275 aa). The active-site Proton acceptor is D173. In terms of domain architecture, Phosphatase tensin-type spans 399–566; sequence SVANYAKGDL…EYMCDMVAEE (168 aa). Position 456 is a phosphoserine (S456). Residues 572–710 enclose the C2 tensin-type domain; it reads SKPILVRAVV…FQVNLEVEVE (139 aa). 2 disordered regions span residues 709–729 and 749–788; these read VEPRDRPSREAPPWENSSMRG and FGKPELPRQPGSTAQYDAGAGSPEAEPTDSDSPPSSSADA. Phosphoserine is present on S770. Residues 770-788 are compositionally biased toward low complexity; that stretch reads SPEAEPTDSDSPPSSSADA. T776 bears the Phosphothreonine mark. S783 is modified (phosphoserine). T794 carries the phosphothreonine modification. Disordered regions lie at residues 801 to 860, 913 to 1035, and 1047 to 1150; these read KEAE…VQQD, CLLG…DLLG, and AVAP…PNYA. S811, S826, S829, S834, and S939 each carry phosphoserine. Low complexity-rich tracts occupy residues 925-939 and 950-966; these read PPEDLLSEDPLLLAS and PRGGPPAAADPFGPLLP. 2 stretches are compositionally biased toward polar residues: residues 967-976 and 1070-1080; these read SSGNNSQPCS and SQASWTKSQNP. S1096 carries the phosphoserine modification. Residues 1109–1124 show a composition bias toward polar residues; sequence TATTPKGSSSWQTSRP. An Omega-N-methylarginine modification is found at R1123. Phosphoserine occurs at positions 1176 and 1185. Residues 1247–1311 enclose the J domain; sequence SRWTPVGMAD…FENQGSRPLF (65 aa).

Belongs to the protein kinase superfamily. Ser/Thr protein kinase family. Ubiquitous. Highest in testis.

It localises to the cytoplasm. The protein localises to the perinuclear region. It is found in the golgi apparatus. Its subcellular location is the trans-Golgi network. The protein resides in the cell junction. It localises to the focal adhesion. The protein localises to the cytoplasmic vesicle. It is found in the clathrin-coated vesicle. The catalysed reaction is L-seryl-[protein] + ATP = O-phospho-L-seryl-[protein] + ADP + H(+). The enzyme catalyses L-threonyl-[protein] + ATP = O-phospho-L-threonyl-[protein] + ADP + H(+). Associates with cyclin G and CDK5. Seems to act as an auxilin homolog that is involved in the uncoating of clathrin-coated vesicles by Hsc70 in non-neuronal cells. Expression oscillates slightly during the cell cycle, peaking at G1. May play a role in clathrin-mediated endocytosis and intracellular trafficking, and in the dynamics of clathrin assembly/disassembly. The protein is Cyclin-G-associated kinase of Homo sapiens (Human).